A 127-amino-acid polypeptide reads, in one-letter code: Glycine cleavage system H protein (127 aa).

Residues 22-104 (EAVIGITQFA…YTDGWMVRVK (83 aa)) form the Lipoyl-binding domain. At Lys-63 the chain carries N6-lipoyllysine.

This sequence belongs to the GcvH family. As to quaternary structure, the glycine cleavage system is composed of four proteins: P, T, L and H. Requires (R)-lipoate as cofactor.

Its function is as follows. The glycine cleavage system catalyzes the degradation of glycine. The H protein shuttles the methylamine group of glycine from the P protein to the T protein. This Nitratidesulfovibrio vulgaris (strain DSM 19637 / Miyazaki F) (Desulfovibrio vulgaris) protein is Glycine cleavage system H protein.